Reading from the N-terminus, the 394-residue chain is Probable sugar efflux transporter (394 aa).

The next 12 membrane-spanning stretches (helical) occupy residues 15–35 (VLML…PVGL), 50–70 (VGLM…PMML), 79–99 (MLLM…SVAW), 109–129 (IGIA…AIRV), 137–157 (QALS…LPIG), 168–188 (ITFA…LKLL), 209–229 (PALV…YTAY), 249–269 (FLLL…SIYG), 272–292 (FPAT…MCLY), 299–319 (LAVS…GLAV), 333–353 (VAMS…ALLG), and 362–382 (MASV…WCAW).

It belongs to the major facilitator superfamily. SotB (TC 2.A.1.2) family.

The protein localises to the cell inner membrane. Involved in the efflux of sugars. The physiological role may be the reduction of the intracellular concentration of toxic sugars or sugar metabolites. The sequence is that of Probable sugar efflux transporter from Erwinia tasmaniensis (strain DSM 17950 / CFBP 7177 / CIP 109463 / NCPPB 4357 / Et1/99).